Consider the following 85-residue polypeptide: Large ribosomal subunit protein bL27 (85 aa).

It belongs to the bacterial ribosomal protein bL27 family.

The chain is Large ribosomal subunit protein bL27 from Persephonella marina (strain DSM 14350 / EX-H1).